We begin with the raw amino-acid sequence, 470 residues long: ATP synthase subunit beta (470 aa).

155-162 lines the ATP pocket; the sequence is GGAGVGKT.

It belongs to the ATPase alpha/beta chains family. In terms of assembly, F-type ATPases have 2 components, CF(1) - the catalytic core - and CF(0) - the membrane proton channel. CF(1) has five subunits: alpha(3), beta(3), gamma(1), delta(1), epsilon(1). CF(0) has three main subunits: a(1), b(2) and c(9-12). The alpha and beta chains form an alternating ring which encloses part of the gamma chain. CF(1) is attached to CF(0) by a central stalk formed by the gamma and epsilon chains, while a peripheral stalk is formed by the delta and b chains.

The protein localises to the cell membrane. It catalyses the reaction ATP + H2O + 4 H(+)(in) = ADP + phosphate + 5 H(+)(out). Its function is as follows. Produces ATP from ADP in the presence of a proton gradient across the membrane. The catalytic sites are hosted primarily by the beta subunits. The protein is ATP synthase subunit beta of Staphylococcus epidermidis (strain ATCC 35984 / DSM 28319 / BCRC 17069 / CCUG 31568 / BM 3577 / RP62A).